The following is a 496-amino-acid chain: Probable cytosol aminopeptidase (496 aa).

Lys266 and Asp271 together coordinate Mn(2+). Lys278 is a catalytic residue. Asp289, Asp348, and Glu350 together coordinate Mn(2+). Arg352 is a catalytic residue.

The protein belongs to the peptidase M17 family. The cofactor is Mn(2+).

The protein localises to the cytoplasm. It carries out the reaction Release of an N-terminal amino acid, Xaa-|-Yaa-, in which Xaa is preferably Leu, but may be other amino acids including Pro although not Arg or Lys, and Yaa may be Pro. Amino acid amides and methyl esters are also readily hydrolyzed, but rates on arylamides are exceedingly low.. The enzyme catalyses Release of an N-terminal amino acid, preferentially leucine, but not glutamic or aspartic acids.. Its function is as follows. Presumably involved in the processing and regular turnover of intracellular proteins. Catalyzes the removal of unsubstituted N-terminal amino acids from various peptides. This Pseudomonas syringae pv. tomato (strain ATCC BAA-871 / DC3000) protein is Probable cytosol aminopeptidase.